Here is a 236-residue protein sequence, read N- to C-terminus: Large ribosomal subunit protein uL3 (236 aa).

It belongs to the universal ribosomal protein uL3 family. Part of the 50S ribosomal subunit. Forms a cluster with proteins L14 and L19.

Its function is as follows. One of the primary rRNA binding proteins, it binds directly near the 3'-end of the 23S rRNA, where it nucleates assembly of the 50S subunit. This chain is Large ribosomal subunit protein uL3, found in Anaeromyxobacter dehalogenans (strain 2CP-1 / ATCC BAA-258).